The sequence spans 257 residues: Isoprenyl transferase (257 aa).

Asp-37 is a catalytic residue. Asp-37 serves as a coordination point for Mg(2+). Substrate is bound by residues 38 to 41, Trp-42, Arg-50, His-54, and 82 to 84; these read GNGR and STE. Catalysis depends on Asn-85, which acts as the Proton acceptor. Substrate contacts are provided by residues Trp-86, Arg-88, Arg-205, and 211–213; that span reads RLS. Residue Glu-224 participates in Mg(2+) binding.

It belongs to the UPP synthase family. In terms of assembly, homodimer. It depends on Mg(2+) as a cofactor.

Catalyzes the condensation of isopentenyl diphosphate (IPP) with allylic pyrophosphates generating different type of terpenoids. The polypeptide is Isoprenyl transferase (Shouchella clausii (strain KSM-K16) (Alkalihalobacillus clausii)).